A 238-amino-acid polypeptide reads, in one-letter code: 7-cyano-7-deazaguanine synthase (238 aa).

Position 12–22 (Phe12–Leu22) interacts with ATP. The Zn(2+) site is built by Cys191, Cys200, Cys203, and Cys206.

It belongs to the QueC family. Requires Zn(2+) as cofactor.

It catalyses the reaction 7-carboxy-7-deazaguanine + NH4(+) + ATP = 7-cyano-7-deazaguanine + ADP + phosphate + H2O + H(+). The protein operates within purine metabolism; 7-cyano-7-deazaguanine biosynthesis. Catalyzes the ATP-dependent conversion of 7-carboxy-7-deazaguanine (CDG) to 7-cyano-7-deazaguanine (preQ(0)). The polypeptide is 7-cyano-7-deazaguanine synthase (Shewanella oneidensis (strain ATCC 700550 / JCM 31522 / CIP 106686 / LMG 19005 / NCIMB 14063 / MR-1)).